The sequence spans 273 residues: 4-diphosphocytidyl-2-C-methyl-D-erythritol kinase (273 aa).

The active site involves lysine 9. 90–100 contacts ATP; sequence PVAAGLGGGSA. Aspartate 129 is a catalytic residue.

The protein belongs to the GHMP kinase family. IspE subfamily.

The enzyme catalyses 4-CDP-2-C-methyl-D-erythritol + ATP = 4-CDP-2-C-methyl-D-erythritol 2-phosphate + ADP + H(+). The protein operates within isoprenoid biosynthesis; isopentenyl diphosphate biosynthesis via DXP pathway; isopentenyl diphosphate from 1-deoxy-D-xylulose 5-phosphate: step 3/6. Functionally, catalyzes the phosphorylation of the position 2 hydroxy group of 4-diphosphocytidyl-2C-methyl-D-erythritol. This chain is 4-diphosphocytidyl-2-C-methyl-D-erythritol kinase, found in Erythrobacter litoralis (strain HTCC2594).